We begin with the raw amino-acid sequence, 200 residues long: High mobility group protein 1 homolog (200 aa).

2 consecutive DNA-binding regions (HMG box) follow at residues 11 to 81 (PRGR…QSYK) and 100 to 168 (PKRN…AEYK). Over residues 64 to 86 (EKSMRDKVRYDREMQSYKPPKGE) the composition is skewed to basic and acidic residues. 2 disordered regions span residues 64-103 (EKSMRDKVRYDREMQSYKPPKGEKNKRRRRRKDPDAPKRN) and 169-200 (AKAKPMKRQVKESSSSSSSDSSSDDSSSDDSD). Residues 190-200 (SSDDSSSDDSD) show a composition bias toward acidic residues.

It belongs to the HMGB family.

Its subcellular location is the nucleus. The protein resides in the chromosome. Its function is as follows. Binds preferentially single-stranded DNA and unwinds double-stranded DNA. The protein is High mobility group protein 1 homolog (HMG1) of Strongylocentrotus purpuratus (Purple sea urchin).